The chain runs to 583 residues: MIQRMSKLFVRTLREDPADAEVPSHRLLVRAGYIRRVAPGIYSWLPLGYAVLRKIEEIVRQEMLHIGGQEVHFPALIPREIYEASGRWNEYGDTLFRLKDRKGADYLLGPTHEELFTLLVKGEYSSYKDYPVILFQIQTKYRDEARPRAGILRGREFVMKDSYSFDLDDAGLAASYTAHREAYRRIFDRLGLRYRIVSAVSGAMGGSASEEFLAVTEVGEDAFVYCRNCDYAANTEAVEIGVPDRLDPTGQPPPQVLDTPDTPTIDALVDRLNSLDLGRRFTAADTLKNVVLKTKAPGADDWELLVVGVPGDRDVDLKRLAGQLDPIQVEPATAEDLARRPELVRGYIGPQILRRIGVRYLVDPLVVPGSAWVTGANEPDKHMANVVRGRDFEPDGEIGAATIRDGDPCGRCGGRLALAQGIEIGHIFQLGRKYTDAFELDALGPDGRPIRITMGSYGIGVSRAVAAIAEQCHDDAGLIWPRSVSPADVHVVIAGKGEQEKLAEEFAAALDTAGLDVLLDDRVDASAGVKFADAELIGIPSIAVVGRGAARGVVEVRDRGSGERRELALTDAVAELRTLAAGA.

This sequence belongs to the class-II aminoacyl-tRNA synthetase family. ProS type 1 subfamily. In terms of assembly, homodimer.

The protein resides in the cytoplasm. The catalysed reaction is tRNA(Pro) + L-proline + ATP = L-prolyl-tRNA(Pro) + AMP + diphosphate. Functionally, catalyzes the attachment of proline to tRNA(Pro) in a two-step reaction: proline is first activated by ATP to form Pro-AMP and then transferred to the acceptor end of tRNA(Pro). As ProRS can inadvertently accommodate and process non-cognate amino acids such as alanine and cysteine, to avoid such errors it has two additional distinct editing activities against alanine. One activity is designated as 'pretransfer' editing and involves the tRNA(Pro)-independent hydrolysis of activated Ala-AMP. The other activity is designated 'posttransfer' editing and involves deacylation of mischarged Ala-tRNA(Pro). The misacylated Cys-tRNA(Pro) is not edited by ProRS. The sequence is that of Proline--tRNA ligase from Acidothermus cellulolyticus (strain ATCC 43068 / DSM 8971 / 11B).